We begin with the raw amino-acid sequence, 487 residues long: Rhoptry apical surface protein 1 (487 aa).

Residues 337–487 form a disordered region; sequence EVAMSGRGGH…EEEQPLLFTQ (151 aa). Basic and acidic residues-rich tracts occupy residues 385–399 and 454–475; these read DGIR…DRRA and EKNE…GVEY.

Interacts with RASP2.

Its subcellular location is the cytoplasmic vesicle. It is found in the secretory vesicle. It localises to the rhoptry membrane. The chain is Rhoptry apical surface protein 1 from Toxoplasma gondii (strain ATCC 50853 / GT1).